A 66-amino-acid polypeptide reads, in one-letter code: Large ribosomal subunit protein uL29 (66 aa).

It belongs to the universal ribosomal protein uL29 family.

In Borrelia garinii subsp. bavariensis (strain ATCC BAA-2496 / DSM 23469 / PBi) (Borreliella bavariensis), this protein is Large ribosomal subunit protein uL29.